A 193-amino-acid chain; its full sequence is ATP-dependent Clp protease proteolytic subunit (193 aa).

Serine 97 functions as the Nucleophile in the catalytic mechanism. Histidine 122 is an active-site residue.

It belongs to the peptidase S14 family. As to quaternary structure, fourteen ClpP subunits assemble into 2 heptameric rings which stack back to back to give a disk-like structure with a central cavity, resembling the structure of eukaryotic proteasomes.

It is found in the cytoplasm. The catalysed reaction is Hydrolysis of proteins to small peptides in the presence of ATP and magnesium. alpha-casein is the usual test substrate. In the absence of ATP, only oligopeptides shorter than five residues are hydrolyzed (such as succinyl-Leu-Tyr-|-NHMec, and Leu-Tyr-Leu-|-Tyr-Trp, in which cleavage of the -Tyr-|-Leu- and -Tyr-|-Trp bonds also occurs).. Functionally, cleaves peptides in various proteins in a process that requires ATP hydrolysis. Has a chymotrypsin-like activity. Plays a major role in the degradation of misfolded proteins. This chain is ATP-dependent Clp protease proteolytic subunit, found in Fusobacterium nucleatum subsp. nucleatum (strain ATCC 25586 / DSM 15643 / BCRC 10681 / CIP 101130 / JCM 8532 / KCTC 2640 / LMG 13131 / VPI 4355).